A 361-amino-acid polypeptide reads, in one-letter code: Histidinol-phosphate aminotransferase (361 aa).

Residue K219 is modified to N6-(pyridoxal phosphate)lysine.

This sequence belongs to the class-II pyridoxal-phosphate-dependent aminotransferase family. Histidinol-phosphate aminotransferase subfamily. In terms of assembly, homodimer. It depends on pyridoxal 5'-phosphate as a cofactor.

The enzyme catalyses L-histidinol phosphate + 2-oxoglutarate = 3-(imidazol-4-yl)-2-oxopropyl phosphate + L-glutamate. It participates in amino-acid biosynthesis; L-histidine biosynthesis; L-histidine from 5-phospho-alpha-D-ribose 1-diphosphate: step 7/9. This chain is Histidinol-phosphate aminotransferase, found in Acinetobacter baumannii (strain ATCC 17978 / DSM 105126 / CIP 53.77 / LMG 1025 / NCDC KC755 / 5377).